Reading from the N-terminus, the 357-residue chain is Protein-glutamate methylesterase/protein-glutamine glutaminase 1 (357 aa).

A Response regulatory domain is found at 10–127; that stretch reads RTLIVDDSAF…DVNKIEKELV (118 aa). The residue at position 61 (Asp61) is a 4-aspartylphosphate. The CheB-type methylesterase domain maps to 159-353; that stretch reads SCAGDFAVLI…EEIVRMSEVK (195 aa). Active-site residues include Ser171, His198, and Asp295.

The protein belongs to the CheB family. Phosphorylated by CheA. Phosphorylation of the N-terminal regulatory domain activates the methylesterase activity.

It is found in the cytoplasm. It carries out the reaction [protein]-L-glutamate 5-O-methyl ester + H2O = L-glutamyl-[protein] + methanol + H(+). It catalyses the reaction L-glutaminyl-[protein] + H2O = L-glutamyl-[protein] + NH4(+). Functionally, involved in chemotaxis. Part of a chemotaxis signal transduction system that modulates chemotaxis in response to various stimuli. Catalyzes the demethylation of specific methylglutamate residues introduced into the chemoreceptors (methyl-accepting chemotaxis proteins or MCP) by CheR. Also mediates the irreversible deamidation of specific glutamine residues to glutamic acid. The sequence is that of Protein-glutamate methylesterase/protein-glutamine glutaminase 1 from Methanosarcina mazei (strain ATCC BAA-159 / DSM 3647 / Goe1 / Go1 / JCM 11833 / OCM 88) (Methanosarcina frisia).